Reading from the N-terminus, the 233-residue chain is Large ribosomal subunit protein uL1 (233 aa).

This sequence belongs to the universal ribosomal protein uL1 family. In terms of assembly, part of the 50S ribosomal subunit.

Binds directly to 23S rRNA. The L1 stalk is quite mobile in the ribosome, and is involved in E site tRNA release. Its function is as follows. Protein L1 is also a translational repressor protein, it controls the translation of the L11 operon by binding to its mRNA. This Shewanella sediminis (strain HAW-EB3) protein is Large ribosomal subunit protein uL1.